Reading from the N-terminus, the 355-residue chain is Protein-glutamate methylesterase/protein-glutamine glutaminase (355 aa).

Residues 7–123 form the Response regulatory domain; that stretch reads AAVVVDDSQF…SVGIKQQQDE (117 aa). Asp57 is modified (4-aspartylphosphate). The segment at 139–159 is disordered; sequence TEAAAERTTSTATSTTTSRSA. One can recognise a CheB-type methylesterase domain in the interval 161 to 355; it reads EYVDKPTLVI…DGVLDTIMRE (195 aa). Active-site residues include Ser173, His200, and Asp297.

The protein belongs to the CheB family. Phosphorylated by CheA. Phosphorylation of the N-terminal regulatory domain activates the methylesterase activity.

It localises to the cytoplasm. It carries out the reaction [protein]-L-glutamate 5-O-methyl ester + H2O = L-glutamyl-[protein] + methanol + H(+). The enzyme catalyses L-glutaminyl-[protein] + H2O = L-glutamyl-[protein] + NH4(+). In terms of biological role, involved in chemotaxis. Part of a chemotaxis signal transduction system that modulates chemotaxis in response to various stimuli. Catalyzes the demethylation of specific methylglutamate residues introduced into the chemoreceptors (methyl-accepting chemotaxis proteins or MCP) by CheR. Also mediates the irreversible deamidation of specific glutamine residues to glutamic acid. The sequence is that of Protein-glutamate methylesterase/protein-glutamine glutaminase from Natronomonas pharaonis (strain ATCC 35678 / DSM 2160 / CIP 103997 / JCM 8858 / NBRC 14720 / NCIMB 2260 / Gabara) (Halobacterium pharaonis).